Reading from the N-terminus, the 372-residue chain is MRVGPVRSAMSGASQPRGPALLFPATRGVPAKRLLDADDAAAVAAKCPRLSECSSPPDYLSPPGSPCSPQPPPAAPGAGGGSGSAPGPSRIADYLLLPLAEREHVSRALCIHTGRELRCKVFPIKHYQDKIRPYIQLPSHSNITGIVEVILGETKAYVFFEKDFGDMHSYVRSRKRLREEEAARLFKQIVSAVAHCHQSAIVLGDLKLRKFVFSTEERTQLRLESLEDTHIMKGEDDALSDKHGCPAYVSPEILNTTGTYSGKAADVWSLGVMLYTLLVGRYPFHDSDPSALFSKIRRGQFCIPEHISPKARCLIRSLLRREPSERLTAPEILLHPWFESVLEPGYIDSEIGTSDQIVPEYQEDSDISSFFC.

2 disordered regions span residues 1 to 23 (MRVG…ALLF) and 52 to 86 (ECSS…GSAP). The span at 59-75 (YLSPPGSPCSPQPPPAA) shows a compositional bias: pro residues. The region spanning 91–338 (IADYLLLPLA…APEILLHPWF (248 aa)) is the Protein kinase domain. A COP1-binding motif is present at residues 355-360 (DQIVPE).

This sequence belongs to the protein kinase superfamily. CAMK Ser/Thr protein kinase family. Tribbles subfamily. In terms of assembly, monomer. Interacts (via protein kinase domain) with CEBPA. Interacts with COP1. In terms of tissue distribution, expressed in most human tissues with the highest levels in skeletal muscle, thyroid gland, pancreas, peripheral blood leukocytes, and bone marrow.

Functionally, adapter protein involved in protein degradation by interacting with COP1 ubiquitin ligase. The COP1-binding motif is masked by autoinhibitory interactions with the protein kinase domain. Serves to alter COP1 substrate specificity by directing the activity of COP1 toward CEBPA. Binds selectively the recognition sequence of CEBPA. Regulates myeloid cell differentiation by altering the expression of CEBPA in a COP1-dependent manner. Controls macrophage, eosinophil and neutrophil differentiation via the COP1-binding domain. Interacts with MAPK kinases and regulates activation of MAP kinases, but has no kinase activity. The chain is Tribbles homolog 1 from Homo sapiens (Human).